The primary structure comprises 135 residues: Putative large ribosomal subunit protein eL32' (135 aa).

It belongs to the eukaryotic ribosomal protein eL32 family.

This Mus musculus (Mouse) protein is Putative large ribosomal subunit protein eL32' (Rpl32-ps).